The sequence spans 518 residues: Serine/threonine-protein kinase UL13 (518 aa).

2 disordered regions span residues 1–22 (MDES…PQGA) and 39–120 (SRRA…PSPP). The segment covering 44-61 (GRPSGPSPRDGAVSGARP) has biased composition (low complexity). Residues 151–518 (PGARSFGGSG…ANPAARHSLS (368 aa)) enclose the Protein kinase domain. ATP is bound by residues 157 to 165 (GGSGGYGEV) and K176. D277 acts as the Proton acceptor in catalysis.

It belongs to the protein kinase superfamily. Ser/Thr protein kinase family. Post-translationally, autophosphorylated.

The protein localises to the virion tegument. It is found in the host nucleus. The enzyme catalyses L-seryl-[protein] + ATP = O-phospho-L-seryl-[protein] + ADP + H(+). It catalyses the reaction L-threonyl-[protein] + ATP = O-phospho-L-threonyl-[protein] + ADP + H(+). Its function is as follows. Multifunctional serine/threonine kinase that plays a role in several processes including egress of virus particles from the nucleus, modulation of the actin cytoskeleton and regulation of viral and cellular gene expression. Regulates the nuclear localization of viral envelopment factors UL34 and UL31, by phosphorylating the US3 kinase, indicating a role in nuclear egress. Disrupts host nuclear lamins, including LMNA and LMNB1. Phosphorylates the viral Fc receptor composed of glycoproteins E (gE) and I (gI). Phosphorylation of glycoprotein E (gE) by UL13 alters its subcellular localization, from the host early endosome to the plasma membrane. Participates in the transcriptional regulation of cellular and viral mRNAs mainly by phosphorylating the viral transcriptional regulator ICP22. Additional substrates have been identified, including UL41, UL49 or host EF1D. This chain is Serine/threonine-protein kinase UL13, found in Homo sapiens (Human).